Reading from the N-terminus, the 348-residue chain is Protein pelota homolog (348 aa).

Belongs to the eukaryotic release factor 1 family. Pelota subfamily. As to quaternary structure, monomer. A divalent metal cation is required as a cofactor.

The protein resides in the cytoplasm. Functionally, may function in recognizing stalled ribosomes, interact with stem-loop structures in stalled mRNA molecules, and effect endonucleolytic cleavage of the mRNA. May play a role in the release non-functional ribosomes and degradation of damaged mRNAs. Has endoribonuclease activity. The chain is Protein pelota homolog from Methanococcus maripaludis (strain C7 / ATCC BAA-1331).